A 142-amino-acid polypeptide reads, in one-letter code: Large ribosomal subunit protein uL13 (142 aa).

The protein belongs to the universal ribosomal protein uL13 family. In terms of assembly, part of the 50S ribosomal subunit.

In terms of biological role, this protein is one of the early assembly proteins of the 50S ribosomal subunit, although it is not seen to bind rRNA by itself. It is important during the early stages of 50S assembly. The sequence is that of Large ribosomal subunit protein uL13 from Hydrogenovibrio crunogenus (strain DSM 25203 / XCL-2) (Thiomicrospira crunogena).